Here is a 243-residue protein sequence, read N- to C-terminus: Probable transcriptional regulatory protein LCA_1307 (243 aa).

A disordered region spans residues M1–R21.

This sequence belongs to the TACO1 family.

The protein localises to the cytoplasm. This is Probable transcriptional regulatory protein LCA_1307 from Latilactobacillus sakei subsp. sakei (strain 23K) (Lactobacillus sakei subsp. sakei).